Here is a 1023-residue protein sequence, read N- to C-terminus: Protein FAM13A (1023 aa).

Positions 43-231 (VSLQELERQG…KILENYNTLF (189 aa)) constitute a Rho-GAP domain. Residues 269–290 (LERDMPKPPPKTKIPKSRSEGS) form a disordered region. S345 is subject to Phosphoserine. Disordered regions lie at residues 381-437 (VNNS…SGFN) and 459-562 (CAGE…EVPQ). A compositionally biased stretch (low complexity) spans 384–405 (SGGQSSEDSESGTLSASSATSA). Basic and acidic residues-rich tracts occupy residues 412–427 (SKEQDEVRHGRDKGLI) and 509–524 (SDERKGNEKDGGHTQH). Polar residues predominate over residues 536 to 549 (PSLSDTKQQRNQDA). 2 positions are modified to phosphoserine: S597 and S617. Disordered stretches follow at residues 628–663 (QYLDDTEVPPSPPNSHSFMRRRSSSLGSYDDEQEDL) and 726–759 (ISEEDLTPRMRQRSNTLPKSFGSQLEKEDEKKQE). Residues 666–730 (AQLTRRIQSL…ESKLKISEED (65 aa)) adopt a coiled-coil conformation. Residue S727 is modified to Phosphoserine. Phosphothreonine is present on T732. Residues 738 to 748 (RSNTLPKSFGS) are compositionally biased toward polar residues. Positions 750–759 (LEKEDEKKQE) are enriched in basic and acidic residues. The stretch at 946–978 (ASIPELLEHLQEMREEKKRIRKKLRDFEDNFFR) forms a coiled coil.

Belongs to the FAM13 family. Isoform 1 is widely expressed, with highest expression in skeletal muscle, thymus, brain and lung. Isoform 3 is less abundant than isoform 1 and predominantly expressed in kidney, pancreas, liver, lung and thymus.

In Homo sapiens (Human), this protein is Protein FAM13A (FAM13A).